A 152-amino-acid polypeptide reads, in one-letter code: Transcriptional regulator MraZ (152 aa).

SpoVT-AbrB domains are found at residues 5–52 (ASAV…PLNQ) and 81–124 (ATEC…SESE).

The protein belongs to the MraZ family. Forms oligomers.

It localises to the cytoplasm. The protein localises to the nucleoid. In Histophilus somni (strain 129Pt) (Haemophilus somnus), this protein is Transcriptional regulator MraZ.